A 355-amino-acid polypeptide reads, in one-letter code: UDP-N-acetylglucosamine--N-acetylmuramyl-(pentapeptide) pyrophosphoryl-undecaprenol N-acetylglucosamine transferase (355 aa).

UDP-N-acetyl-alpha-D-glucosamine contacts are provided by residues 15–17, Asn127, Arg163, Ser191, Ile244, 263–268, and Gln288; these read TGG and ALTVSE.

The protein belongs to the glycosyltransferase 28 family. MurG subfamily.

Its subcellular location is the cell inner membrane. It carries out the reaction di-trans,octa-cis-undecaprenyl diphospho-N-acetyl-alpha-D-muramoyl-L-alanyl-D-glutamyl-meso-2,6-diaminopimeloyl-D-alanyl-D-alanine + UDP-N-acetyl-alpha-D-glucosamine = di-trans,octa-cis-undecaprenyl diphospho-[N-acetyl-alpha-D-glucosaminyl-(1-&gt;4)]-N-acetyl-alpha-D-muramoyl-L-alanyl-D-glutamyl-meso-2,6-diaminopimeloyl-D-alanyl-D-alanine + UDP + H(+). It participates in cell wall biogenesis; peptidoglycan biosynthesis. Cell wall formation. Catalyzes the transfer of a GlcNAc subunit on undecaprenyl-pyrophosphoryl-MurNAc-pentapeptide (lipid intermediate I) to form undecaprenyl-pyrophosphoryl-MurNAc-(pentapeptide)GlcNAc (lipid intermediate II). In Shigella flexneri serotype 5b (strain 8401), this protein is UDP-N-acetylglucosamine--N-acetylmuramyl-(pentapeptide) pyrophosphoryl-undecaprenol N-acetylglucosamine transferase.